Reading from the N-terminus, the 542-residue chain is 4-coumarate--CoA ligase 2 (542 aa).

ATP contacts are provided by Ser-189, Ser-190, Gly-191, Thr-192, Thr-193, and Lys-197. Residues Tyr-239 and Ser-243 each coordinate (E)-4-coumaroyl-AMP. 2 residues coordinate (E)-caffeoyl-AMP: Tyr-239 and Ser-243. Residues Tyr-239 and Ser-243 each coordinate (E)-feruloyl-AMP. CoA is bound at residue Lys-260. Positions Asp-262–Gln-331 are SBD1. Ala-309 serves as a coordination point for (E)-4-coumaroyl-AMP. A (E)-caffeoyl-AMP-binding site is contributed by Ala-309. Ala-309 is a (E)-feruloyl-AMP binding site. Residues Gln-331, Gly-332, and Thr-336 each coordinate ATP. Residues Gly-332, Thr-336, Met-344, Asp-420, Arg-435, Lys-437, and Lys-441 each coordinate (E)-4-coumaroyl-AMP. Positions 332, 336, 344, 420, 435, 437, and 441 each coordinate (E)-caffeoyl-AMP. Gly-332, Thr-336, Met-344, Asp-420, Arg-435, Lys-437, and Lys-441 together coordinate (E)-feruloyl-AMP. Gly-332 and Thr-336 together coordinate AMP. Residues Gly-332–Tyr-399 form an SBD2 region. ATP-binding residues include Asp-420 and Arg-435. Residue Asp-420 participates in AMP binding. 2 residues coordinate AMP: Lys-437 and Lys-441. CoA is bound by residues Lys-443 and Gly-444. Residue Gln-446 participates in AMP binding. Lys-526 provides a ligand contact to ATP.

Belongs to the ATP-dependent AMP-binding enzyme family. Mg(2+) serves as cofactor. Mainly expressed in old stems and, to a lower extent, in flowers (e.g. in ovary), leaves, young stems, shoot tips and patel limbs.

It carries out the reaction (E)-4-coumarate + ATP + CoA = (E)-4-coumaroyl-CoA + AMP + diphosphate. The catalysed reaction is (E)-caffeate + ATP + CoA = (E)-caffeoyl-CoA + AMP + diphosphate. The enzyme catalyses (E)-ferulate + ATP + CoA = (E)-feruloyl-CoA + AMP + diphosphate. It catalyses the reaction (E)-cinnamate + ATP + CoA = (E)-cinnamoyl-CoA + AMP + diphosphate. It carries out the reaction (E)-4-coumarate + ATP + H(+) = (E)-4-coumaroyl-AMP + diphosphate. The catalysed reaction is (E)-4-coumaroyl-AMP + CoA = (E)-4-coumaroyl-CoA + AMP + H(+). The enzyme catalyses (E)-caffeate + ATP + H(+) = (E)-caffeoyl-AMP + diphosphate. It catalyses the reaction (E)-caffeoyl-AMP + CoA = (E)-caffeoyl-CoA + AMP + H(+). It carries out the reaction (E)-ferulate + ATP + H(+) = (E)-feruloyl-AMP + diphosphate. The catalysed reaction is (E)-feruloyl-AMP + CoA = (E)-feruloyl-CoA + AMP + H(+). It functions in the pathway phytoalexin biosynthesis; 3,4',5-trihydroxystilbene biosynthesis; 3,4',5-trihydroxystilbene from trans-4-coumarate: step 1/2. Its function is as follows. Major enzyme of the phenylpropanoid pathway that mediates the production of several precursors for numerous metabolites and regulates carbon flow. Catalyzes the formation of CoA thioesters using 4-coumarate, ferulate, caffeate, and cinnamate as substrates. Follows a two-step reaction mechanism, wherein a (hydroxy)cinnamate substrate first undergoes adenylation by ATP leading to an acyl-AMP, followed by a thioesterification in the presence of CoA to yield the final (hydroxy)cinnamoyl-CoA product. Almost inactive toward sinapate. In Nicotiana tabacum (Common tobacco), this protein is 4-coumarate--CoA ligase 2.